A 65-amino-acid polypeptide reads, in one-letter code: Small ribosomal subunit protein eS31 (65 aa).

Zn(2+)-binding residues include C36, C39, C55, and C58. Residues 36–58 form a C4-type zinc finger; that stretch reads CPKCGSVMAFHREPVPRWHCGKC.

The protein belongs to the eukaryotic ribosomal protein eS31 family. Part of the 30S ribosomal subunit. The cofactor is Zn(2+).

The sequence is that of Small ribosomal subunit protein eS31 from Pyrobaculum calidifontis (strain DSM 21063 / JCM 11548 / VA1).